The following is a 235-amino-acid chain: Probable transcriptional regulatory protein CFF8240_0424 (235 aa).

This sequence belongs to the TACO1 family.

Its subcellular location is the cytoplasm. This is Probable transcriptional regulatory protein CFF8240_0424 from Campylobacter fetus subsp. fetus (strain 82-40).